The chain runs to 439 residues: Acetyl esterase Axe7A (439 aa).

The first 31 residues, 1–31, serve as a signal peptide directing secretion; the sequence is MFNFAPKQTTEMKKLLFTLVFVLGSMATALA. The active-site Nucleophile is Ser-309. Residues Asp-391 and His-420 each act as charge relay system in the active site.

It belongs to the carbohydrate esterase 7 family.

The protein operates within glycan degradation; xylan degradation. In terms of biological role, involved in degradation of plant cell wall polysaccharides. Has acetyl esterase activity towards a broad range of substrates including xylose-tetraacetate, 4-O-methylumbelliferyl acetate, glucose-pentaacetate, cephalosporin C, and acetylated xylo-oligosaccharides smaller than xylo-heptaose. Displays no detectable activity on polymeric acetylated xylan. The sequence is that of Acetyl esterase Axe7A from Xylanibacter ruminicola (strain ATCC 19189 / DSM 19721 / CIP 105475 / JCM 8958 / 23) (Prevotella ruminicola).